The following is a 22-amino-acid chain: Chymotrypsin inhibitor (22 aa).

The segment at 1-22 (FDESFGFQGPSTYEKTPLGEPA) is disordered.

Hemolymph.

The protein localises to the secreted. It is found in the extracellular space. Inhibits chymotrypsin stoichiometrically. Also inhibits porcine pancreatic elastase and trypsin. The protein is Chymotrypsin inhibitor of Mythimna unipuncta (Armyworm moth).